Consider the following 48-residue polypeptide: Cytochrome c oxidase subunit 2 (48 aa).

Residues 1 to 14 are Mitochondrial intermembrane-facing; sequence MAHPAQLGLQDASS. The chain crosses the membrane as a helical span at residues 15-45; it reads PIXEELLHFHEDALMIVFLISTLVLYIITTT. Over 46-48 the chain is Mitochondrial matrix; that stretch reads VST.

This sequence belongs to the cytochrome c oxidase subunit 2 family. Component of the cytochrome c oxidase (complex IV, CIV), a multisubunit enzyme composed of 14 subunits. The complex is composed of a catalytic core of 3 subunits MT-CO1, MT-CO2 and MT-CO3, encoded in the mitochondrial DNA, and 11 supernumerary subunits COX4I, COX5A, COX5B, COX6A, COX6B, COX6C, COX7A, COX7B, COX7C, COX8 and NDUFA4, which are encoded in the nuclear genome. The complex exists as a monomer or a dimer and forms supercomplexes (SCs) in the inner mitochondrial membrane with NADH-ubiquinone oxidoreductase (complex I, CI) and ubiquinol-cytochrome c oxidoreductase (cytochrome b-c1 complex, complex III, CIII), resulting in different assemblies (supercomplex SCI(1)III(2)IV(1) and megacomplex MCI(2)III(2)IV(2)). Found in a complex with TMEM177, COA6, COX18, COX20, SCO1 and SCO2. Interacts with TMEM177 in a COX20-dependent manner. Interacts with COX20. Interacts with COX16. Cu cation is required as a cofactor.

It is found in the mitochondrion inner membrane. It carries out the reaction 4 Fe(II)-[cytochrome c] + O2 + 8 H(+)(in) = 4 Fe(III)-[cytochrome c] + 2 H2O + 4 H(+)(out). Functionally, component of the cytochrome c oxidase, the last enzyme in the mitochondrial electron transport chain which drives oxidative phosphorylation. The respiratory chain contains 3 multisubunit complexes succinate dehydrogenase (complex II, CII), ubiquinol-cytochrome c oxidoreductase (cytochrome b-c1 complex, complex III, CIII) and cytochrome c oxidase (complex IV, CIV), that cooperate to transfer electrons derived from NADH and succinate to molecular oxygen, creating an electrochemical gradient over the inner membrane that drives transmembrane transport and the ATP synthase. Cytochrome c oxidase is the component of the respiratory chain that catalyzes the reduction of oxygen to water. Electrons originating from reduced cytochrome c in the intermembrane space (IMS) are transferred via the dinuclear copper A center (CU(A)) of subunit 2 and heme A of subunit 1 to the active site in subunit 1, a binuclear center (BNC) formed by heme A3 and copper B (CU(B)). The BNC reduces molecular oxygen to 2 water molecules using 4 electrons from cytochrome c in the IMS and 4 protons from the mitochondrial matrix. The protein is Cytochrome c oxidase subunit 2 (mt-co2) of Polypterus sp. (Bichir).